We begin with the raw amino-acid sequence, 147 residues long: Transcription elongation factor Spt5 (147 aa).

Residues 91 to 122 (KGDVVEIIAGPFKGERAKVIRVDKHKEEVTLE) form the KOW domain.

Belongs to the archaeal Spt5 family. As to quaternary structure, heterodimer composed of Spt4 and Spt5. Interacts with RNA polymerase (RNAP). Forms a homodimer in solution.

Functionally, stimulates transcription elongation. This is Transcription elongation factor Spt5 from Methanocaldococcus jannaschii (strain ATCC 43067 / DSM 2661 / JAL-1 / JCM 10045 / NBRC 100440) (Methanococcus jannaschii).